Reading from the N-terminus, the 163-residue chain is uncharacterized protein (163 aa).

A compositionally biased stretch (basic and acidic residues) spans 1-10 (MGVPRAREGR). Residues 1–163 (MGVPRAREGR…WSFTPLRWGS (163 aa)) are disordered.

This is an uncharacterized protein from Homo sapiens (Human).